Consider the following 191-residue polypeptide: Pyridoxal 5'-phosphate synthase subunit PdxT (191 aa).

48–50 (GES) contributes to the L-glutamine binding site. Cys81 (nucleophile) is an active-site residue. L-glutamine is bound by residues Arg109 and 136 to 137 (IR). Active-site charge relay system residues include His172 and Glu174.

This sequence belongs to the glutaminase PdxT/SNO family. As to quaternary structure, in the presence of PdxS, forms a dodecamer of heterodimers. Only shows activity in the heterodimer.

It catalyses the reaction aldehydo-D-ribose 5-phosphate + D-glyceraldehyde 3-phosphate + L-glutamine = pyridoxal 5'-phosphate + L-glutamate + phosphate + 3 H2O + H(+). The enzyme catalyses L-glutamine + H2O = L-glutamate + NH4(+). It participates in cofactor biosynthesis; pyridoxal 5'-phosphate biosynthesis. Functionally, catalyzes the hydrolysis of glutamine to glutamate and ammonia as part of the biosynthesis of pyridoxal 5'-phosphate. The resulting ammonia molecule is channeled to the active site of PdxS. This chain is Pyridoxal 5'-phosphate synthase subunit PdxT, found in Thermus thermophilus (strain ATCC BAA-163 / DSM 7039 / HB27).